Here is a 197-residue protein sequence, read N- to C-terminus: Imidazoleglycerol-phosphate dehydratase (197 aa).

It belongs to the imidazoleglycerol-phosphate dehydratase family.

It is found in the cytoplasm. The catalysed reaction is D-erythro-1-(imidazol-4-yl)glycerol 3-phosphate = 3-(imidazol-4-yl)-2-oxopropyl phosphate + H2O. The protein operates within amino-acid biosynthesis; L-histidine biosynthesis; L-histidine from 5-phospho-alpha-D-ribose 1-diphosphate: step 6/9. In Thioalkalivibrio sulfidiphilus (strain HL-EbGR7), this protein is Imidazoleglycerol-phosphate dehydratase.